Here is a 194-residue protein sequence, read N- to C-terminus: Nucleoside triphosphate pyrophosphatase (194 aa).

The active-site Proton acceptor is the aspartate 68.

This sequence belongs to the Maf family. A divalent metal cation is required as a cofactor.

The protein localises to the cytoplasm. The catalysed reaction is a ribonucleoside 5'-triphosphate + H2O = a ribonucleoside 5'-phosphate + diphosphate + H(+). It catalyses the reaction a 2'-deoxyribonucleoside 5'-triphosphate + H2O = a 2'-deoxyribonucleoside 5'-phosphate + diphosphate + H(+). Its function is as follows. Nucleoside triphosphate pyrophosphatase. May have a dual role in cell division arrest and in preventing the incorporation of modified nucleotides into cellular nucleic acids. This chain is Nucleoside triphosphate pyrophosphatase, found in Corynebacterium jeikeium (strain K411).